A 332-amino-acid chain; its full sequence is Ribosomal RNA small subunit methyltransferase C (332 aa).

Belongs to the methyltransferase superfamily. RsmC family. As to quaternary structure, monomer.

Its subcellular location is the cytoplasm. It catalyses the reaction guanosine(1207) in 16S rRNA + S-adenosyl-L-methionine = N(2)-methylguanosine(1207) in 16S rRNA + S-adenosyl-L-homocysteine + H(+). Specifically methylates the guanine in position 1207 of 16S rRNA in the 30S particle. The sequence is that of Ribosomal RNA small subunit methyltransferase C from Stutzerimonas stutzeri (strain A1501) (Pseudomonas stutzeri).